The primary structure comprises 1252 residues: DNA-directed RNA polymerase subunit beta (1252 aa).

The protein belongs to the RNA polymerase beta chain family. The RNAP catalytic core consists of 2 alpha, 1 beta, 1 beta' and 1 omega subunit. When a sigma factor is associated with the core the holoenzyme is formed, which can initiate transcription.

The enzyme catalyses RNA(n) + a ribonucleoside 5'-triphosphate = RNA(n+1) + diphosphate. Its function is as follows. DNA-dependent RNA polymerase catalyzes the transcription of DNA into RNA using the four ribonucleoside triphosphates as substrates. The protein is DNA-directed RNA polymerase subunit beta of Chlamydia muridarum (strain MoPn / Nigg).